The primary structure comprises 504 residues: Probable ergothioneine transporter EgtUBC (504 aa).

One can recognise an ABC transmembrane type-1 domain in the interval 19–198; that stretch reads MIEHIQISFI…LLAIIFDLIL (180 aa). 6 consecutive transmembrane segments (helical) span residues 25–45, 49–69, 70–90, 145–165, 178–198, and 209–229; these read ISFIALLIATAIAVPLGILLT, TISEIVMNIAAILQTIPSLAL, LGLMIPLFGIGRVPAIIALVV, AMVLIIGTATLAALIGAGGLG, SLILLGAIPAALLAIIFDLIL, and LLMTLGVIVMIIILAIAIPMF. Positions 231-504 are ergothioneine binding domain; that stretch reads QKGDKITLAG…DYLKAKGLIK (274 aa).

It in the N-terminal section; belongs to the binding-protein-dependent transport system permease family. This sequence in the C-terminal section; belongs to the OsmX family. The complex is probably composed of at least an ATP-binding protein (EgtUA) and a transmembrane protein (EgtUBC).

It localises to the membrane. In terms of biological role, part of an ABC transporter complex EgtU required for the uptake of ergothioneine (EGT), a natural low-molecular weight (LMW) thiol antioxidant. Responsible for the translocation of the substrate across the membrane. Also contains a C-terminal periplasmic solute-binding domain (SBD) which binds to EGT with sub-micromolar affinity. Probably does not bind L-hercynine. This Staphylococcus aureus (strain USA300) protein is Probable ergothioneine transporter EgtUBC (egtUBC).